The chain runs to 599 residues: Aspartate--tRNA(Asp/Asn) ligase (599 aa).

Glu-180 is a binding site for L-aspartate. Residues 204–207 are aspartate; the sequence is QLLK. Arg-226 contributes to the L-aspartate binding site. ATP contacts are provided by residues 226 to 228 and Gln-235; that span reads RDE. His-457 contributes to the L-aspartate binding site. Glu-491 is an ATP binding site. Arg-498 is an L-aspartate binding site. 543 to 546 is an ATP binding site; the sequence is GWDR. The disordered stretch occupies residues 565 to 599; sequence KAGGGRDPLTGAPAPISDEQRAETGVDYDPDADEN. Acidic residues predominate over residues 590–599; that stretch reads VDYDPDADEN.

It belongs to the class-II aminoacyl-tRNA synthetase family. Type 1 subfamily. Homodimer.

It localises to the cytoplasm. The enzyme catalyses tRNA(Asx) + L-aspartate + ATP = L-aspartyl-tRNA(Asx) + AMP + diphosphate. Functionally, aspartyl-tRNA synthetase with relaxed tRNA specificity since it is able to aspartylate not only its cognate tRNA(Asp) but also tRNA(Asn). Reaction proceeds in two steps: L-aspartate is first activated by ATP to form Asp-AMP and then transferred to the acceptor end of tRNA(Asp/Asn). In Bifidobacterium longum (strain NCC 2705), this protein is Aspartate--tRNA(Asp/Asn) ligase.